Reading from the N-terminus, the 173-residue chain is NADH-ubiquinone oxidoreductase chain 6 (173 aa).

5 helical membrane-spanning segments follow: residues 1-21 (MTYF…AVAS), 27-47 (YGVV…LSLG), 48-68 (VSFV…VVFV), 87-107 (VVGY…VGGL), and 139-159 (CGVG…FVVL).

This sequence belongs to the complex I subunit 6 family.

The protein localises to the mitochondrion membrane. It carries out the reaction a ubiquinone + NADH + 5 H(+)(in) = a ubiquinol + NAD(+) + 4 H(+)(out). Core subunit of the mitochondrial membrane respiratory chain NADH dehydrogenase (Complex I) that is believed to belong to the minimal assembly required for catalysis. Complex I functions in the transfer of electrons from NADH to the respiratory chain. The immediate electron acceptor for the enzyme is believed to be ubiquinone. This chain is NADH-ubiquinone oxidoreductase chain 6 (MT-ND6), found in Larus canus (Common gull).